A 255-amino-acid chain; its full sequence is 5'-nucleotidase SurE (255 aa).

The a divalent metal cation site is built by D8, D9, S40, and N93.

It belongs to the SurE nucleotidase family. Requires a divalent metal cation as cofactor.

The protein resides in the cytoplasm. It catalyses the reaction a ribonucleoside 5'-phosphate + H2O = a ribonucleoside + phosphate. Nucleotidase that shows phosphatase activity on nucleoside 5'-monophosphates. The protein is 5'-nucleotidase SurE of Bradyrhizobium diazoefficiens (strain JCM 10833 / BCRC 13528 / IAM 13628 / NBRC 14792 / USDA 110).